Consider the following 456-residue polypeptide: DnaJ homolog dnj-10 (456 aa).

A J domain is found at 44–108 (DYYKTLGVDK…TKRQEYDAYG (65 aa)). The CR-type zinc-finger motif lies at 178-257 (GATKNVSVNV…CEGEGQTVQR (80 aa)). CXXCXGXG motif repeat units lie at residues 208–215 (CPYCNGTG), 231–238 (CNRCRGSG), and 245–252 (CQECEGEG). Positions 395–429 (KGLEKNQKTEEKETKKNEEKKSEGASESQKRRSEP) are enriched in basic and acidic residues. Residues 395-443 (KGLEKNQKTEEKETKKNEEKKSEGASESQKRRSEPVAENAETIDENQEN) are disordered.

The chain is DnaJ homolog dnj-10 (dnj-10) from Caenorhabditis elegans.